The sequence spans 120 residues: Small ribosomal subunit protein bS16 (120 aa).

The tract at residues 81–120 (GLAKRPARNNPQKAEPGEKAKERAAKRAEKAAAPAEDAAA) is disordered. The segment covering 95-110 (EPGEKAKERAAKRAEK) has biased composition (basic and acidic residues). Residues 111–120 (AAAPAEDAAA) are compositionally biased toward low complexity.

This sequence belongs to the bacterial ribosomal protein bS16 family.

This is Small ribosomal subunit protein bS16 from Methylobacterium radiotolerans (strain ATCC 27329 / DSM 1819 / JCM 2831 / NBRC 15690 / NCIMB 10815 / 0-1).